The primary structure comprises 396 residues: 3-amino-4-hydroxybenzoic acid synthase (396 aa).

A disordered region spans residues 1–29; that stretch reads MSSSPSPSPSSSSSSSASSSASSSPSSSS.

Belongs to the archaeal-type DHQ synthase family. GriH subfamily. As to quaternary structure, monomer. Mn(2+) serves as cofactor.

It carries out the reaction 2-amino-4,5-dihydroxy-6-oxo-7-(phosphooxy)heptanoate = 3-amino-4-hydroxybenzoate + phosphate + 2 H2O + H(+). Catalyzes the cyclization of 2-amino-4,5-dihydroxy-6-one-heptanoic acid-7-phosphate to yield 3-amino-4-hydroxybenzoic acid (3,4-AHBA). The protein is 3-amino-4-hydroxybenzoic acid synthase (griH) of Streptomyces griseus subsp. griseus (strain JCM 4626 / CBS 651.72 / NBRC 13350 / KCC S-0626 / ISP 5235).